A 336-amino-acid chain; its full sequence is Dihydroorotate dehydrogenase (quinone) (336 aa).

Residues 62-66 (AGLDK) and threonine 86 contribute to the FMN site. A substrate-binding site is contributed by lysine 66. 111 to 115 (NRMGF) serves as a coordination point for substrate. 2 residues coordinate FMN: asparagine 139 and asparagine 172. Residue asparagine 172 participates in substrate binding. The Nucleophile role is filled by serine 175. Residue asparagine 177 participates in substrate binding. Lysine 217 and threonine 245 together coordinate FMN. 246–247 (NT) is a binding site for substrate. FMN contacts are provided by residues glycine 268, glycine 297, and 318–319 (YS).

Belongs to the dihydroorotate dehydrogenase family. Type 2 subfamily. As to quaternary structure, monomer. Requires FMN as cofactor.

It localises to the cell membrane. It catalyses the reaction (S)-dihydroorotate + a quinone = orotate + a quinol. It participates in pyrimidine metabolism; UMP biosynthesis via de novo pathway; orotate from (S)-dihydroorotate (quinone route): step 1/1. Functionally, catalyzes the conversion of dihydroorotate to orotate with quinone as electron acceptor. In Pectobacterium carotovorum subsp. carotovorum (strain PC1), this protein is Dihydroorotate dehydrogenase (quinone).